A 971-amino-acid chain; its full sequence is Translation initiation factor IF-2 (971 aa).

Positions D48 to K63 are enriched in basic and acidic residues. Disordered stretches follow at residues D48 to I86 and D101 to Q381. Positions G105 to A114 are enriched in low complexity. Residues E121 to A181 are compositionally biased toward basic and acidic residues. Low complexity predominate over residues A182–T203. Basic and acidic residues predominate over residues D210–R261. A compositionally biased stretch (pro residues) spans P277–P286. Over residues A304–A326 the composition is skewed to low complexity. Residues S356–K369 are compositionally biased toward gly residues. In terms of domain architecture, tr-type G spans P471–K640. A G1 region spans residues G480 to T487. Position 480–487 (G480–T487) interacts with GTP. The interval G505–H509 is G2. Positions D526–G529 are G3. GTP is bound by residues D526–H530 and N580–D583. The tract at residues N580 to D583 is G4. The tract at residues S616–K618 is G5.

It belongs to the TRAFAC class translation factor GTPase superfamily. Classic translation factor GTPase family. IF-2 subfamily.

It is found in the cytoplasm. Functionally, one of the essential components for the initiation of protein synthesis. Protects formylmethionyl-tRNA from spontaneous hydrolysis and promotes its binding to the 30S ribosomal subunits. Also involved in the hydrolysis of GTP during the formation of the 70S ribosomal complex. In Burkholderia orbicola (strain MC0-3), this protein is Translation initiation factor IF-2.